We begin with the raw amino-acid sequence, 365 residues long: DNA replication and repair protein RecF (365 aa).

ATP is bound at residue 30–37 (GPNGSGKT).

It belongs to the RecF family.

It localises to the cytoplasm. Its function is as follows. The RecF protein is involved in DNA metabolism; it is required for DNA replication and normal SOS inducibility. RecF binds preferentially to single-stranded, linear DNA. It also seems to bind ATP. This is DNA replication and repair protein RecF from Azotobacter vinelandii (strain DJ / ATCC BAA-1303).